The chain runs to 727 residues: Procollagen-lysine,2-oxoglutarate 5-dioxygenase 1 (727 aa).

Residues 1–18 (MRPLLLLALLGWLLLAEA) form the signal peptide. Residues Asn-163, Asn-197, and Asn-538 are each glycosylated (N-linked (GlcNAc...) asparagine). A Fe2OG dioxygenase domain is found at 636–727 (QFDLAFVVRY…RYIAVSFVDP (92 aa)). Residues His-656 and Asp-658 each contribute to the Fe cation site. A glycan (N-linked (GlcNAc...) asparagine) is linked at Asn-686. Fe cation is bound at residue His-708. Arg-718 is a catalytic residue.

Homodimer. Identified in a complex with P3H3 and P3H4. Requires Fe(2+) as cofactor. L-ascorbate serves as cofactor.

It is found in the rough endoplasmic reticulum membrane. The catalysed reaction is L-lysyl-[collagen] + 2-oxoglutarate + O2 = (5R)-5-hydroxy-L-lysyl-[collagen] + succinate + CO2. Part of a complex composed of PLOD1, P3H3 and P3H4 that catalyzes hydroxylation of lysine residues in collagen alpha chains and is required for normal assembly and cross-linkling of collagen fibrils. Forms hydroxylysine residues in -Xaa-Lys-Gly- sequences in collagens. These hydroxylysines serve as sites of attachment for carbohydrate units and are essential for the stability of the intermolecular collagen cross-links. This chain is Procollagen-lysine,2-oxoglutarate 5-dioxygenase 1 (PLOD1), found in Homo sapiens (Human).